A 159-amino-acid chain; its full sequence is Protein-export protein SecB (159 aa).

It belongs to the SecB family. In terms of assembly, homotetramer, a dimer of dimers. One homotetramer interacts with 1 SecA dimer.

The protein resides in the cytoplasm. One of the proteins required for the normal export of preproteins out of the cell cytoplasm. It is a molecular chaperone that binds to a subset of precursor proteins, maintaining them in a translocation-competent state. It also specifically binds to its receptor SecA. The sequence is that of Protein-export protein SecB from Bartonella bacilliformis (strain ATCC 35685 / KC583 / Herrer 020/F12,63).